A 688-amino-acid chain; its full sequence is Elongation factor G (688 aa).

Positions 8-282 constitute a tr-type G domain; sequence EKFRNFGIMA…GVVDYLPSPL (275 aa). GTP-binding positions include 17–24, 81–85, and 135–138; these read AHIDAGKT, DTPGH, and NKMD.

This sequence belongs to the TRAFAC class translation factor GTPase superfamily. Classic translation factor GTPase family. EF-G/EF-2 subfamily.

It is found in the cytoplasm. Functionally, catalyzes the GTP-dependent ribosomal translocation step during translation elongation. During this step, the ribosome changes from the pre-translocational (PRE) to the post-translocational (POST) state as the newly formed A-site-bound peptidyl-tRNA and P-site-bound deacylated tRNA move to the P and E sites, respectively. Catalyzes the coordinated movement of the two tRNA molecules, the mRNA and conformational changes in the ribosome. The chain is Elongation factor G from Clostridium perfringens (strain ATCC 13124 / DSM 756 / JCM 1290 / NCIMB 6125 / NCTC 8237 / Type A).